We begin with the raw amino-acid sequence, 229 residues long: UPF0441 protein YE3666 (229 aa).

2 disordered regions span residues 101–125 (PAQA…QQSG) and 190–229 (KPAV…SMGG). 2 stretches are compositionally biased toward low complexity: residues 109–120 (TSSSSSETTAAA) and 214–229 (RSAA…SMGG).

Belongs to the UPF0441 family.

The chain is UPF0441 protein YE3666 from Yersinia enterocolitica serotype O:8 / biotype 1B (strain NCTC 13174 / 8081).